The primary structure comprises 145 residues: Large ribosomal subunit protein bL19 (145 aa).

Over residues 112–130 (GKSARIKERRPAKAVEKTS) the composition is skewed to basic and acidic residues. Positions 112-145 (GKSARIKERRPAKAVEKTSKPASAKKPAAKANKK) are disordered.

This sequence belongs to the bacterial ribosomal protein bL19 family.

Its function is as follows. This protein is located at the 30S-50S ribosomal subunit interface and may play a role in the structure and function of the aminoacyl-tRNA binding site. The protein is Large ribosomal subunit protein bL19 of Malacoplasma penetrans (strain HF-2) (Mycoplasma penetrans).